Here is a 145-residue protein sequence, read N- to C-terminus: Putative pre-16S rRNA nuclease (145 aa).

The protein belongs to the YqgF nuclease family.

It is found in the cytoplasm. Could be a nuclease involved in processing of the 5'-end of pre-16S rRNA. This is Putative pre-16S rRNA nuclease from Pseudomonas fluorescens (strain Pf0-1).